The chain runs to 848 residues: MSDTDGKKPLGLGGGRSGHVKQSFSHGRTHNVVVETKRKRVVVPGKTGAAAGGGRSGSPSAVSGDPSKRPAGISDAEMERRMAALRAAKAREVEEAAQRIADEKAREEERERRRLELEAKEREEREREEALRLKAEEDERRAREAELREKKKAEIAKPKTEARPATPADRAAAEAAAVRAETKGVSAAGPRKTDRDRDTRGGGGDDRDSRNKGRDDSRRTGKLSLSQALDGEGGRQRSLAAMKRKQEKARQKAMGGNQRAEKQVRDVQLPETIVVSELANRMAERTPDVIKSLMRMGMMVTANQSIDADTAELVIDEFGHHAVRVSDADVEQVIDQVEDKPEDLQPRAPIITIMGHVDHGKTSLLDAIRHANVVAGEAGGITQHIGAYQVKASNGAVLTFLDTPGHAAFTSMRARGAQVTDIVVLVVAADDAVMPQTVEAINHAKAAKVPMIVAINKIDKPAANPQKVRTDLLLHEVVVEAMSGEVQDVEVSAKTGQGLDTLLEAIALQAEILELKANPDRPAQGAVIEAQLDVGRGPVATVLVQNGTLKRGDIFVVGEQWGKVRALINDKGERVDEAGPSVPVEVLGLNGTPEAGDVLNVVSTEAQAREIADYRIQAAKDKRAAAGAAITLDQMLAKAKADENVAELPVVIKADVQGSAEAIVQALEKIGNDEVRVRVLHYGVGAITESDIGLAEASQAPVIGFNVRANAPARNAANQKGVEIRYYSIIYDLVDDIKAAASGLLSAEVRENFIGYAEIKEVFRVSGVGNVAGCLVTEGVARRSAGVRLLRDNVVIHEGTLKTLKRFKDEVKEVQSGQECGMAFENYDDIRKGDVIEIFEREEVQRQL.

Positions 1 to 265 (MSDTDGKKPL…GNQRAEKQVR (265 aa)) are disordered. A compositionally biased stretch (basic and acidic residues) spans 89–162 (KAREVEEAAQ…AEIAKPKTEA (74 aa)). A compositionally biased stretch (low complexity) spans 163-179 (RPATPADRAAAEAAAVR). A compositionally biased stretch (basic and acidic residues) spans 191-219 (RKTDRDRDTRGGGGDDRDSRNKGRDDSRR). A tr-type G domain is found at 346–514 (PRAPIITIMG…AIALQAEILE (169 aa)). Positions 355-362 (GHVDHGKT) are G1. 355 to 362 (GHVDHGKT) is a GTP binding site. Residues 380 to 384 (GITQH) form a G2 region. The G3 stretch occupies residues 402 to 405 (DTPG). GTP-binding positions include 402–406 (DTPGH) and 456–459 (NKID). The G4 stretch occupies residues 456–459 (NKID). The interval 492–494 (SAK) is G5.

Belongs to the TRAFAC class translation factor GTPase superfamily. Classic translation factor GTPase family. IF-2 subfamily.

It localises to the cytoplasm. Functionally, one of the essential components for the initiation of protein synthesis. Protects formylmethionyl-tRNA from spontaneous hydrolysis and promotes its binding to the 30S ribosomal subunits. Also involved in the hydrolysis of GTP during the formation of the 70S ribosomal complex. The protein is Translation initiation factor IF-2 of Paracoccus denitrificans (strain Pd 1222).